Consider the following 388-residue polypeptide: Dual-specificity RNA methyltransferase RlmN (388 aa).

E109 acts as the Proton acceptor in catalysis. The Radical SAM core domain maps to 115 to 354; sequence EDDRATLCVS…TIVRKTRGDD (240 aa). A disulfide bridge connects residues C122 and C359. C129, C133, and C136 together coordinate [4Fe-4S] cluster. Residues 183 to 184, S215, 237 to 239, and N316 each bind S-adenosyl-L-methionine; these read GE and SLH. C359 (S-methylcysteine intermediate) is an active-site residue.

The protein belongs to the radical SAM superfamily. RlmN family. Requires [4Fe-4S] cluster as cofactor.

The protein localises to the cytoplasm. It carries out the reaction adenosine(2503) in 23S rRNA + 2 reduced [2Fe-2S]-[ferredoxin] + 2 S-adenosyl-L-methionine = 2-methyladenosine(2503) in 23S rRNA + 5'-deoxyadenosine + L-methionine + 2 oxidized [2Fe-2S]-[ferredoxin] + S-adenosyl-L-homocysteine. The enzyme catalyses adenosine(37) in tRNA + 2 reduced [2Fe-2S]-[ferredoxin] + 2 S-adenosyl-L-methionine = 2-methyladenosine(37) in tRNA + 5'-deoxyadenosine + L-methionine + 2 oxidized [2Fe-2S]-[ferredoxin] + S-adenosyl-L-homocysteine. Functionally, specifically methylates position 2 of adenine 2503 in 23S rRNA and position 2 of adenine 37 in tRNAs. m2A2503 modification seems to play a crucial role in the proofreading step occurring at the peptidyl transferase center and thus would serve to optimize ribosomal fidelity. This is Dual-specificity RNA methyltransferase RlmN from Salmonella typhimurium (strain LT2 / SGSC1412 / ATCC 700720).